The primary structure comprises 388 residues: Trans-enoyl reductase tenC (388 aa).

51–54 is a binding site for NADP(+); that stretch reads VDGK. 142-149 provides a ligand contact to substrate; it reads VGVASVGM. NADP(+)-binding positions include 219 to 222, Y237, and 284 to 285; these read SSES and LD. Position 304-308 (304-308) interacts with substrate; the sequence is SFTQF. 373–374 contributes to the NADP(+) binding site; it reads IK.

Belongs to the zinc-containing alcohol dehydrogenase family. As to quaternary structure, monomer.

The protein operates within secondary metabolite biosynthesis. Functionally, trans-enoyl reductase; part of the gene cluster that mediates the biosynthesis of tenellin-type 2-pyridones, iron-chelating compounds involved in iron stress tolerance, competition with the natural competitor fungus Metarhizium robertsii and insect hosts infection. TenC collaborates with the hybrid PKS-NRPS synthetase tenS to catalyze the assembly of the polyketide-amino acid backbone, since tenS lacks a designated enoylreductase (ER) domain. Upon formation of the polyketide backbone on the thiotemplate of tenS, the triketide is transferred to the NRPS module and linked to tyrosine to produce the pyrrolidine-2-dione intermediates, including pretellinin A, 11-hydropretellenin A, 12-hydropretellenin A, 13-hydropretellenin A, 14-hydropretellenin A, 12-oxopretellenin A and prototellinin D. The pathway begins with the assembly of the polyketide-amino acid backbone by the hybrid PKS-NRPS tenS with the help of the enoyl reductase tenC. These enzymes catalyze the synthesis of the pyrrolidine-2-dione intermediates pretellinin A, 11-hydropretellenin A, 12-hydropretellenin A, 13-hydropretellenin A, 14-hydropretellenin A, 12-oxopretellenin A and prototellinin D. The cytochrome P450 monooxygenase tenA then catalyzes an oxidative ring expansion of pretenellin A and 14-hydropretellenin A to form the 2-pyridone core, leading to pretenellin B and pyridovericin, respectively. The cytochrome P450 monooxygenase tenB is then required for the selective N-hydroxylation of the 2-pyridone nitrogen of yield tellinin and 15-hydroxytellenin (15-HT), respectively. The UDP-glucosyltransferase GT1 and the methyltransferase MT1, located outside the tenS gene cluster, contribute to the stepwise glycosylation and methylation of 15-HT to obtain the glycoside pyridovericin-N-O-(4-O-methyl-beta-D-glucopyranoside) (PMGP). Additional related compounds such as 1-O-methyl-15-HT, (8Z)-1-O-methyl-15-HT, and O-methyltenellin A are also produced but the enzymes involved in their biosynthesis have still to be determined. This chain is Trans-enoyl reductase tenC, found in Beauveria bassiana (White muscardine disease fungus).